Here is a 405-residue protein sequence, read N- to C-terminus: Insertion element IS110 uncharacterized 43.6 kDa protein (405 aa).

This chain is Insertion element IS110 uncharacterized 43.6 kDa protein, found in Streptomyces coelicolor (strain ATCC BAA-471 / A3(2) / M145).